Here is a 333-residue protein sequence, read N- to C-terminus: MESLFLLVLGNTEISTVPGISVAGATPELTKLTPVADAEYLFHEKPLTIDVIPVTPEGHPTPAIITKAARELANFPVLVVRGGTYLAPLVPHVHISDAVGRDFRKEPALPEFGDIIKRAKLFGEELNKTPIKELVIGESTPGGTTTAQAVLWALGYEARTSSASPDNPQSLKEKVIAEAFERAGIEKGQLRDNPLEALRQFGDPMMATVIGIALGFRRDIVLAGGTQMLAVSALLKALGEDLSRFMIATTKWVANDKSATFIETAKEIGIISYAADLDFSKSEFKGLRDYERGYVKEGVGAGGATWLAVKAGFSPEDVSEKVEELYRRLMEMK.

Belongs to the UPF0284 family.

The sequence is that of UPF0284 protein TGAM_0534 from Thermococcus gammatolerans (strain DSM 15229 / JCM 11827 / EJ3).